The sequence spans 2336 residues: Voltage-dependent N-type calcium channel subunit alpha-1B (2336 aa).

The segment at 1–37 (MVRFGDELGGRYGGTGGGERARGGGAGGAGGPGQGGL) is disordered. At 1-90 (MVRFGDELGG…DNVVRKYAKR (90 aa)) the chain is on the cytoplasmic side. Residues 10–37 (GRYGGTGGGERARGGGAGGAGGPGQGGL) are compositionally biased toward gly residues. An Omega-N-methylarginine modification is found at R22. The stretch at 82–359 (NVVRKYAKRI…LVLGVLSGEF (278 aa)) is one I repeat. Residues 91 to 114 (ITEWPPFEYMILATIIANCIVLAL) form a helical membrane-spanning segment. The Extracellular segment spans residues 115-131 (EQHLPDGDKTPMSERLD). A helical membrane pass occupies residues 132 to 152 (DTEPYFIGIFCFEAGIKIIAL). At 153–163 (GFVFHKGSYLR) the chain is on the cytoplasmic side. The chain crosses the membrane as a helical span at residues 164 to 182 (NGWNVMDFVVVLTEILATA). Over 183–187 (GTDFD) the chain is Extracellular. Residues 188-211 (LRTLRAVRVLRPLKLVSGIPSLQV) form a helical membrane-spanning segment. Residues 212–221 (VLKSIMKAMV) lie on the Cytoplasmic side of the membrane. A helical membrane pass occupies residues 222 to 244 (PLLQIGLLLFFAILMFAIIGLEF). Residues 245 to 331 (YMGKFHKACF…NTNDAAGNTW (87 aa)) are Extracellular-facing. A glycan (N-linked (GlcNAc...) asparagine) is linked at N256. The helical transmembrane segment at 332–356 (NWLYFIPLIIIGSFFMLNLVLGVLS) threads the bilayer. Over 357 to 483 (GEFAKERERV…FLIRRMVKAQ (127 aa)) the chain is Cytoplasmic. The segment at 379-396 (QQIERELNGYLEWIFKAE) is binding to the beta subunit. S411 carries the post-translational modification Phosphoserine. 452 to 459 (ASLKSGKT) provides a ligand contact to ATP. An II repeat occupies 469 to 713 (EKMFRFLIRR…VFLAIAVDNL (245 aa)). A helical membrane pass occupies residues 484–502 (SFYWVVLCVVALNTLCVAM). Residues 503–512 (VHYNQPQRLT) are Extracellular-facing. Residues 513–535 (TALYFAEFVFLGLFLTEMSLKMY) traverse the membrane as a helical segment. Residues 536–545 (GLGPRSYFRS) lie on the Cytoplasmic side of the membrane. Position 545 (S545) interacts with a 1,2-diacyl-sn-glycero-3-phospho-(1D-myo-inositol-4,5-bisphosphate). A helical membrane pass occupies residues 546–567 (SFNCFDFGVIVGSIFEVVWAAI). The Extracellular portion of the chain corresponds to 568–574 (KPGTSFG). The helical transmembrane segment at 575–587 (ISVLRALRLLRIF) threads the bilayer. A 1,2-diacyl-sn-glycero-3-phospho-(1D-myo-inositol-4,5-bisphosphate) contacts are provided by R585 and K588. Residues 588–605 (KVTKYWNSLRNLVVSLLN) are Cytoplasmic-facing. A helical membrane pass occupies residues 606 to 631 (SMKSIISLLFLLFLFIVVFALLGMQL). Over 632–683 (FGGQFNFQDETPTTNFDTFPAAILTVFQILTGEDWNAVMYHGIESQGGVSKG) the chain is Extracellular. A helical transmembrane segment spans residues 684-710 (MFSSFYFIVLTLFGNYTLLNVFLAIAV). Over 711–1149 (DNLANAQELT…FCHYIVTMRY (439 aa)) the chain is Cytoplasmic. Phosphoserine is present on residues S746, S749, and S784. 2 disordered regions span residues 800–1021 (YAST…HQPK) and 1051–1076 (EQPE…STTV). 6 stretches are compositionally biased toward basic and acidic residues: residues 806 to 827 (VRPD…RDGL), 870 to 891 (EQDR…EERA), 920 to 930 (GSPEEATEREP), 938 to 948 (HAQDSSKEGKE), 970 to 981 (GPRETENSEEPT), and 996 to 1021 (PPER…HQPK). The segment covering 1059-1076 (QRNVTRMGSQPSDPSTTV) has biased composition (polar residues). Phosphoserine is present on S1067. The III repeat unit spans residues 1135-1421 (NLLRRFCHYI…IFVALIIITF (287 aa)). A helical transmembrane segment spans residues 1150-1168 (FEMVILVVIALSSIALAAE). The Extracellular segment spans residues 1169-1176 (DPVRTDSF). A helical membrane pass occupies residues 1177-1201 (RNNALKYMDYIFTGVFTFEMVIKMI). Over 1202–1215 (DLGLLLHPGAYFRD) the chain is Cytoplasmic. Residues 1216 to 1240 (LWNILDFIVVSGALVAFAFSSFMGG) form a helical membrane-spanning segment. The Extracellular portion of the chain corresponds to 1241 to 1246 (SKGKDI). The chain crosses the membrane as a helical span at residues 1247–1267 (NTIKSLRVLRVLRPLKTIKRL). Topologically, residues 1268-1285 (PKLKAVFDCVVNSLKNVL) are cytoplasmic. The helical transmembrane segment at 1286-1305 (NILIVYMLFMFIFAVIAVQL) threads the bilayer. Topologically, residues 1306–1392 (FKGKFFYCTD…EQGPSPGFRM (87 aa)) are extracellular. The chain crosses the membrane as a helical span at residues 1393–1418 (ELSIFYVVYFVVFPFFFVNIFVALII). Residues 1419–1473 (ITFQEQGDKVMSECSLEKNERACIDFAISAKPLTRYMPQNKQSFQYKTWTFVVSP) are Cytoplasmic-facing. Residues 1458-1711 (NKQSFQYKTW…LFVAVIMDNF (254 aa)) form an IV repeat. A helical membrane pass occupies residues 1474-1492 (PFEYFIMAMIALNTVVLMM). The Extracellular segment spans residues 1493–1500 (KFYDAPYE). Residues 1501–1525 (YELMLKCLNIVFTSMFSLECILKII) form a helical membrane-spanning segment. At 1526–1535 (AFGVLNYFRD) the chain is on the cytoplasmic side. Residues 1536 to 1557 (AWNVFDFVTVLGSITDILVTEI) traverse the membrane as a helical segment. Residues 1558 to 1563 (ANNFIN) are Extracellular-facing. The N-linked (GlcNAc...) asparagine glycan is linked to N1563. Residues 1564–1582 (LSFLRLFRAARLIKLCRQG) traverse the membrane as a helical segment. Residues 1583–1601 (YTIRILLWTFVQSFKALPY) are Cytoplasmic-facing. A helical transmembrane segment spans residues 1602–1621 (VCLLIAMLFFIYAIIGMQVF). Over 1622-1683 (GNIALDDGTS…ANASECGSDF (62 aa)) the chain is Extracellular. Residue N1675 is glycosylated (N-linked (GlcNAc...) asparagine). The chain crosses the membrane as a helical span at residues 1684–1707 (AYFYFVSFIFLCSFLMLNLFVAVI). Topologically, residues 1708-2336 (MDNFEYLTRD…YHHPDQDHWC (629 aa)) are cytoplasmic. The region spanning 1724–1759 (HHLDEFIRVWAEYDPAACGRISYNDMFEMLKHMSPP) is the EF-hand domain. D1737, R1743, and D1748 together coordinate Ca(2+). The interval 1981-2202 (TLRGPDGEPQ…TPRPSITYKT (222 aa)) is disordered. Residues 2048 to 2062 (SHHHHHRCHRRRDKK) show a composition bias toward basic residues. Position 2065 is a phosphoserine (S2065). Residues 2097 to 2113 (CRRERKQERGRSQERRQ) are compositionally biased toward basic and acidic residues. The segment covering 2161–2177 (GSGSVNGSPLMSTSGAS) has biased composition (polar residues). 3 positions are modified to phosphoserine: S2221, S2230, and S2253.

The protein belongs to the calcium channel alpha-1 subunit (TC 1.A.1.11) family. CACNA1B subfamily. As to quaternary structure, multisubunit complex consisting of alpha-1, alpha-2, beta and delta subunits in a 1:1:1:1 ratio. The channel activity is directed by the pore-forming and voltage-sensitive alpha-1 subunit. In many cases, this subunit is sufficient to generate voltage-sensitive calcium channel activity. The auxiliary subunits beta and alpha-2/delta linked by a disulfide bridge regulate the channel activity. Interacts with RIMS1. Interacts with FMR1 (via C-terminus); this interaction induces a decrease in the number of presynaptic functional CACNA1B channels at the cell surface. Phosphorylated in vitro by CaM-kinase II, PKA, PKC and CGPK. As to expression, central nervous system.

It is found in the membrane. The enzyme catalyses Ca(2+)(in) = Ca(2+)(out). Is specifically blocked by omega-conotoxin GVIA. Is specifically blocked by omega-conotoxin MVIIA (ziconotide). Is insensitive to dihydropyridines (DHP). Voltage-sensitive calcium channels (VSCC) mediate the entry of calcium ions into excitable cells and are also involved in a variety of calcium-dependent processes, including muscle contraction, hormone or neurotransmitter release, gene expression, cell motility, cell division and cell death. This alpha-1B subunit gives rise to N-type calcium currents. N-type calcium channels belong to the 'high-voltage activated' (HVA) group. They are involved in pain signaling. Calcium channels containing alpha-1B subunit may play a role in directed migration of immature neurons. Mediates Ca(2+) release probability at hippocampal neuronal soma and synaptic terminals. In Rattus norvegicus (Rat), this protein is Voltage-dependent N-type calcium channel subunit alpha-1B (Cacna1b).